The primary structure comprises 24 residues: Cytochrome c oxidase subunit 5A-2, mitochondrial (24 aa).

It belongs to the cytochrome c oxidase subunit 5A family. As to quaternary structure, component of the cytochrome c oxidase (complex IV, CIV), a multisubunit enzyme composed of 14 subunits. The complex is composed of a catalytic core of 3 subunits MT-CO1, MT-CO2 and MT-CO3, encoded in the mitochondrial DNA, and 11 supernumerary subunits COX4I, COX5A, COX5B, COX6A, COX6B, COX6C, COX7A, COX7B, COX7C, COX8 and NDUFA4, which are encoded in the nuclear genome. The complex exists as a monomer or a dimer and forms supercomplexes (SCs) in the inner mitochondrial membrane with NADH-ubiquinone oxidoreductase (complex I, CI) and ubiquinol-cytochrome c oxidoreductase (cytochrome b-c1 complex, complex III, CIII), resulting in different assemblies (supercomplex SCI(1)III(2)IV(1) and megacomplex MCI(2)III(2)IV(2)).

Its subcellular location is the mitochondrion inner membrane. It participates in energy metabolism; oxidative phosphorylation. Functionally, component of the cytochrome c oxidase, the last enzyme in the mitochondrial electron transport chain which drives oxidative phosphorylation. The respiratory chain contains 3 multisubunit complexes succinate dehydrogenase (complex II, CII), ubiquinol-cytochrome c oxidoreductase (cytochrome b-c1 complex, complex III, CIII) and cytochrome c oxidase (complex IV, CIV), that cooperate to transfer electrons derived from NADH and succinate to molecular oxygen, creating an electrochemical gradient over the inner membrane that drives transmembrane transport and the ATP synthase. Cytochrome c oxidase is the component of the respiratory chain that catalyzes the reduction of oxygen to water. Electrons originating from reduced cytochrome c in the intermembrane space (IMS) are transferred via the dinuclear copper A center (CU(A)) of subunit 2 and heme A of subunit 1 to the active site in subunit 1, a binuclear center (BNC) formed by heme A3 and copper B (CU(B)). The BNC reduces molecular oxygen to 2 water molecules using 4 electrons from cytochrome c in the IMS and 4 protons from the mitochondrial matrix. The chain is Cytochrome c oxidase subunit 5A-2, mitochondrial from Thunnus obesus (Bigeye tuna).